Reading from the N-terminus, the 78-residue chain is Serine rich endogenous peptide 19 (78 aa).

The signal sequence occupies residues 1–25; the sequence is MCNIVVFLLTLTLFLFSGLSNTAFA. The SCOOP motif signature appears at 50 to 64; that stretch reads KIEVDGSCSRRAPGR. Positions 56-58 match the SxS motif essential for MIK2 binding motif; the sequence is SCS. The tract at residues 57–78 is disordered; sequence CSRRAPGRRRPPNRPPKPCTKP. A compositionally biased stretch (pro residues) spans 69-78; that stretch reads NRPPKPCTKP.

It belongs to the serine rich endogenous peptide (SCOOP) phytocytokine family. As to quaternary structure, interacts with MIK2 (via extracellular leucine-rich repeat domain); this interaction triggers the formation of complex between MIK2 and the BAK1/SERK3 and SERK4 coreceptors, and subsequent BAK1 activation by phosphorylation.

The protein localises to the cell membrane. It is found in the secreted. The protein resides in the extracellular space. It localises to the apoplast. Its function is as follows. Brassicaceae-specific phytocytokine (plant endogenous peptide released into the apoplast) perceived by MIK2 in a BAK1/SERK3 and SERK4 coreceptors-dependent manner, that modulates various physiological and antimicrobial processes including growth prevention and reactive oxygen species (ROS) response regulation. The sequence is that of Serine rich endogenous peptide 19 from Arabidopsis thaliana (Mouse-ear cress).